We begin with the raw amino-acid sequence, 171 residues long: Large ribosomal subunit protein bL17 (171 aa).

The disordered stretch occupies residues 130–171 (PGYKKSKGKKATKAKGKKAKATPAAEAAAAATTEAAPAEEKK). Residues 133-149 (KKSKGKKATKAKGKKAK) show a composition bias toward basic residues. Positions 150-165 (ATPAAEAAAAATTEAA) are enriched in low complexity.

The protein belongs to the bacterial ribosomal protein bL17 family. Part of the 50S ribosomal subunit. Contacts protein L32.

The polypeptide is Large ribosomal subunit protein bL17 (Opitutus terrae (strain DSM 11246 / JCM 15787 / PB90-1)).